A 560-amino-acid chain; its full sequence is Dihydroxy-acid dehydratase (560 aa).

Cys-52 is a [2Fe-2S] cluster binding site. A Mg(2+)-binding site is contributed by Asp-84. Cys-125 lines the [2Fe-2S] cluster pocket. Mg(2+)-binding residues include Asp-126 and Lys-127. The residue at position 127 (Lys-127) is an N6-carboxylysine. A [2Fe-2S] cluster-binding site is contributed by Cys-197. Residue Glu-448 participates in Mg(2+) binding. The Proton acceptor role is filled by Ser-474.

The protein belongs to the IlvD/Edd family. In terms of assembly, homodimer. [2Fe-2S] cluster is required as a cofactor. The cofactor is Mg(2+).

It carries out the reaction (2R)-2,3-dihydroxy-3-methylbutanoate = 3-methyl-2-oxobutanoate + H2O. The catalysed reaction is (2R,3R)-2,3-dihydroxy-3-methylpentanoate = (S)-3-methyl-2-oxopentanoate + H2O. Its pathway is amino-acid biosynthesis; L-isoleucine biosynthesis; L-isoleucine from 2-oxobutanoate: step 3/4. It participates in amino-acid biosynthesis; L-valine biosynthesis; L-valine from pyruvate: step 3/4. Its function is as follows. Functions in the biosynthesis of branched-chain amino acids. Catalyzes the dehydration of (2R,3R)-2,3-dihydroxy-3-methylpentanoate (2,3-dihydroxy-3-methylvalerate) into 2-oxo-3-methylpentanoate (2-oxo-3-methylvalerate) and of (2R)-2,3-dihydroxy-3-methylbutanoate (2,3-dihydroxyisovalerate) into 2-oxo-3-methylbutanoate (2-oxoisovalerate), the penultimate precursor to L-isoleucine and L-valine, respectively. The chain is Dihydroxy-acid dehydratase from Francisella tularensis subsp. novicida (strain U112).